Here is a 358-residue protein sequence, read N- to C-terminus: Probable isocitrate dehydrogenase [NAD] subunit alpha, mitochondrial (358 aa).

R108, R118, R139, and D226 together coordinate substrate. D226, D250, and D254 together coordinate Mg(2+).

Belongs to the isocitrate and isopropylmalate dehydrogenases family. As to quaternary structure, heterooligomer of subunits alpha, beta, and gamma in the apparent ratio of 2:1:1. The cofactor is Mg(2+). Mn(2+) is required as a cofactor.

Its subcellular location is the mitochondrion. It catalyses the reaction D-threo-isocitrate + NAD(+) = 2-oxoglutarate + CO2 + NADH. This Caenorhabditis elegans protein is Probable isocitrate dehydrogenase [NAD] subunit alpha, mitochondrial (idha-1).